Here is a 97-residue protein sequence, read N- to C-terminus: Small ribosomal subunit protein bS6 (97 aa).

This sequence belongs to the bacterial ribosomal protein bS6 family.

In terms of biological role, binds together with bS18 to 16S ribosomal RNA. This Limosilactobacillus fermentum (strain NBRC 3956 / LMG 18251) (Lactobacillus fermentum) protein is Small ribosomal subunit protein bS6.